Here is a 310-residue protein sequence, read N- to C-terminus: Ribosomal RNA small subunit methyltransferase H (310 aa).

S-adenosyl-L-methionine-binding positions include 32 to 34 (GGH), Asp-52, Phe-79, Asp-100, and Gln-107.

It belongs to the methyltransferase superfamily. RsmH family.

It localises to the cytoplasm. It carries out the reaction cytidine(1402) in 16S rRNA + S-adenosyl-L-methionine = N(4)-methylcytidine(1402) in 16S rRNA + S-adenosyl-L-homocysteine + H(+). Functionally, specifically methylates the N4 position of cytidine in position 1402 (C1402) of 16S rRNA. This Geobacillus thermodenitrificans (strain NG80-2) protein is Ribosomal RNA small subunit methyltransferase H.